The primary structure comprises 229 residues: Demethylmenaquinone methyltransferase (229 aa).

S-adenosyl-L-methionine is bound by residues threonine 57, aspartate 77, and 101–102; that span reads DV.

The protein belongs to the class I-like SAM-binding methyltransferase superfamily. MenG/UbiE family.

The enzyme catalyses a 2-demethylmenaquinol + S-adenosyl-L-methionine = a menaquinol + S-adenosyl-L-homocysteine + H(+). The protein operates within quinol/quinone metabolism; menaquinone biosynthesis; menaquinol from 1,4-dihydroxy-2-naphthoate: step 2/2. In terms of biological role, methyltransferase required for the conversion of demethylmenaquinol (DMKH2) to menaquinol (MKH2). The polypeptide is Demethylmenaquinone methyltransferase (Chlamydia muridarum (strain MoPn / Nigg)).